Here is a 96-residue protein sequence, read N- to C-terminus: (4S)-4-hydroxy-5-phosphonooxypentane-2,3-dione isomerase (96 aa).

In terms of domain architecture, ABM spans 2–91 (HVTLVEINVH…MTGPRKKRLF (90 aa)).

This sequence belongs to the LsrG family. Homodimer.

It is found in the cytoplasm. The enzyme catalyses (2S)-2-hydroxy-3,4-dioxopentyl phosphate = 3-hydroxy-2,4-dioxopentyl phosphate. Functionally, involved in the degradation of phospho-AI-2, thereby terminating induction of the lsr operon and closing the AI-2 signaling cycle. Catalyzes the conversion of (4S)-4-hydroxy-5-phosphonooxypentane-2,3-dione (P-DPD) to 3-hydroxy-5-phosphonooxypentane-2,4-dione (P-HPD). The sequence is that of (4S)-4-hydroxy-5-phosphonooxypentane-2,3-dione isomerase from Escherichia coli O9:H4 (strain HS).